Consider the following 71-residue polypeptide: Protein MTH_1184 (71 aa).

In Methanothermobacter thermautotrophicus (strain ATCC 29096 / DSM 1053 / JCM 10044 / NBRC 100330 / Delta H) (Methanobacterium thermoautotrophicum), this protein is Protein MTH_1184.